The primary structure comprises 446 residues: Ribosomal protein uS12 methylthiotransferase RimO (446 aa).

Residues 7 to 118 (PKIAFAHLGC…IVEVIERVER (112 aa)) enclose the MTTase N-terminal domain. 6 residues coordinate [4Fe-4S] cluster: Cys-16, Cys-52, Cys-81, Cys-156, Cys-160, and Cys-163. The region spanning 142-371 (TTPAPVAYLR…MELQQPIAQR (230 aa)) is the Radical SAM core domain. A TRAM domain is found at 374 to 440 (AAEVGKIVPV…IYDLYGIIPA (67 aa)).

Belongs to the methylthiotransferase family. RimO subfamily. The cofactor is [4Fe-4S] cluster.

The protein resides in the cytoplasm. It carries out the reaction L-aspartate(89)-[ribosomal protein uS12]-hydrogen + (sulfur carrier)-SH + AH2 + 2 S-adenosyl-L-methionine = 3-methylsulfanyl-L-aspartate(89)-[ribosomal protein uS12]-hydrogen + (sulfur carrier)-H + 5'-deoxyadenosine + L-methionine + A + S-adenosyl-L-homocysteine + 2 H(+). Its function is as follows. Catalyzes the methylthiolation of an aspartic acid residue of ribosomal protein uS12. This is Ribosomal protein uS12 methylthiotransferase RimO from Thermosynechococcus vestitus (strain NIES-2133 / IAM M-273 / BP-1).